A 517-amino-acid polypeptide reads, in one-letter code: UDP-N-acetylmuramoyl-tripeptide--D-alanyl-D-alanine ligase (517 aa).

Residue 138–144 (GSSGKTS) participates in ATP binding.

The protein belongs to the MurCDEF family. MurF subfamily.

It is found in the cytoplasm. The catalysed reaction is D-alanyl-D-alanine + UDP-N-acetyl-alpha-D-muramoyl-L-alanyl-gamma-D-glutamyl-meso-2,6-diaminopimelate + ATP = UDP-N-acetyl-alpha-D-muramoyl-L-alanyl-gamma-D-glutamyl-meso-2,6-diaminopimeloyl-D-alanyl-D-alanine + ADP + phosphate + H(+). It functions in the pathway cell wall biogenesis; peptidoglycan biosynthesis. Functionally, involved in cell wall formation. Catalyzes the final step in the synthesis of UDP-N-acetylmuramoyl-pentapeptide, the precursor of murein. The polypeptide is UDP-N-acetylmuramoyl-tripeptide--D-alanyl-D-alanine ligase (Mycobacterium leprae (strain TN)).